A 135-amino-acid chain; its full sequence is MIREFSSLQNDIINIQEHYSLNNNMDVRGDHNRKNTSFRGSAPAPIMGKQELFRTLSSQNSPRRLISASYFSLESMVVLVGLTASLLILPLILPPLPPPPFMLLLIPIGIMVLLMVLAFMPSSNSKHVSSSSTFM.

An organ Size Related (OSR) domain region spans residues 71–122; it reads FSLESMVVLVGLTASLLILPLILPPLPPPPFMLLLIPIGIMVLLMVLAFMPS. Helical transmembrane passes span 76–96 and 100–120; these read MVVLVGLTASLLILPLILPPL and PFMLLLIPIGIMVLLMVLAFM.

This sequence belongs to the plant organ size related (OSR) protein family. In terms of tissue distribution, expressed in cotyledons, roots, flowers, siliques and leaves.

The protein resides in the membrane. Its subcellular location is the nucleus. The protein localises to the cytoplasm. It is found in the endoplasmic reticulum. In terms of biological role, promotes cell expansion-dependent organ growth, probably via a brassinosteroids signaling pathway. Acts downstream of BRI1. This chain is ARGOS-like protein (ARL), found in Arabidopsis thaliana (Mouse-ear cress).